The primary structure comprises 110 residues: Late cornified envelope protein 1A (110 aa).

Positions 1-10 are enriched in low complexity; the sequence is MSCQQSQQQC. Disordered regions lie at residues 1–23 and 83–110; these read MSCQ…CPPK and QSSG…GGCC. Residues 11–23 show a composition bias toward pro residues; sequence QPPPKCTPKCPPK. Residues 83 to 95 show a composition bias toward low complexity; it reads QSSGCCSQPSGGS. Gly residues predominate over residues 96–110; it reads SCCGGDSGQHSGGCC.

This sequence belongs to the LCE family. In terms of assembly, interacts with CYSRT1. As to expression, skin-specific. Expression was readily detected in adult trunk skin, adult arm skin, fetal skin, penal skin, vulva, esophagus and tongue. Not expressed in the cervix, rectum, lung, colon, or placenta.

In terms of biological role, precursors of the cornified envelope of the stratum corneum. This chain is Late cornified envelope protein 1A (LCE1A), found in Homo sapiens (Human).